Consider the following 362-residue polypeptide: Putative protein ARB2BP (362 aa).

The chain crosses the membrane as a helical span at residues 229–245; the sequence is IAFIVHGYGGLVFMDLL.

The protein belongs to the ARB2 family.

The protein localises to the membrane. The polypeptide is Putative protein ARB2BP (Homo sapiens (Human)).